Consider the following 395-residue polypeptide: E3 ubiquitin-protein ligase NHLRC1 (395 aa).

The segment at 26-72 adopts an RING-type zinc-finger fold; that stretch reads CKVCFEKFGHRQQRRPRNLSCGHVVCLACVAALAHPRTLALECPFCR. 6 NHL repeats span residues 113 to 157, 161 to 204, 205 to 245, 248 to 300, 301 to 349, and 350 to 393; these read ALTC…FDSG, AHQF…FDFF, GQIK…LDVD, EGVL…FSSS, MQLV…LGKP, and EEFP…YKVD.

As to quaternary structure, interacts with AGL. Interacts (via the NHL repeats) with EPM2A/laforin. Forms a complex with EPM2A/laforin and HSP70. Interacts with PRDM8. In terms of tissue distribution, expressed in brain, cerebellum, spinal cord, medulla, heart, liver, skeletal muscle and pancreas.

Its subcellular location is the endoplasmic reticulum. The protein resides in the nucleus. It carries out the reaction S-ubiquitinyl-[E2 ubiquitin-conjugating enzyme]-L-cysteine + [acceptor protein]-L-lysine = [E2 ubiquitin-conjugating enzyme]-L-cysteine + N(6)-ubiquitinyl-[acceptor protein]-L-lysine.. It functions in the pathway protein modification; protein ubiquitination. E3 ubiquitin-protein ligase. Together with the phosphatase EPM2A/laforin, appears to be involved in the clearance of toxic polyglucosan and protein aggregates via multiple pathways. In complex with EPM2A/laforin and HSP70, suppresses the cellular toxicity of misfolded proteins by promoting their degradation through the ubiquitin-proteasome system (UPS). Ubiquitinates the glycogen-targeting protein phosphatase subunits PPP1R3C/PTG and PPP1R3D in a laforin-dependent manner and targets them for proteasome-dependent degradation, thus decreasing glycogen accumulation. Polyubiquitinates EPM2A/laforin and ubiquitinates AGL and targets them for proteasome-dependent degradation. Also promotes proteasome-independent protein degradation through the macroautophagy pathway. The sequence is that of E3 ubiquitin-protein ligase NHLRC1 (NHLRC1) from Homo sapiens (Human).